We begin with the raw amino-acid sequence, 487 residues long: NADH-quinone oxidoreductase subunit N (487 aa).

14 consecutive transmembrane segments (helical) span residues 8–28, 37–57, 71–91, 104–124, 125–145, 159–179, 203–223, 235–255, 269–289, 303–323, 327–347, 374–394, 408–427, and 449–469; these read LLAL…MLAI, AFVV…IVMA, GYAV…CTFG, EFYL…GSRH, LASL…LVGY, YMVL…LLYA, LMGG…LAPF, PAPV…CVLL, IHWL…LLAL, ISHF…QMPV, GVYL…ISMM, AVLT…GFIG, WWLS…YYLR, and AITS…ALGL.

Belongs to the complex I subunit 2 family. In terms of assembly, NDH-1 is composed of 14 different subunits. Subunits NuoA, H, J, K, L, M, N constitute the membrane sector of the complex.

It is found in the cell inner membrane. The enzyme catalyses a quinone + NADH + 5 H(+)(in) = a quinol + NAD(+) + 4 H(+)(out). In terms of biological role, NDH-1 shuttles electrons from NADH, via FMN and iron-sulfur (Fe-S) centers, to quinones in the respiratory chain. The immediate electron acceptor for the enzyme in this species is believed to be ubiquinone. Couples the redox reaction to proton translocation (for every two electrons transferred, four hydrogen ions are translocated across the cytoplasmic membrane), and thus conserves the redox energy in a proton gradient. This chain is NADH-quinone oxidoreductase subunit N, found in Aeromonas hydrophila subsp. hydrophila (strain ATCC 7966 / DSM 30187 / BCRC 13018 / CCUG 14551 / JCM 1027 / KCTC 2358 / NCIMB 9240 / NCTC 8049).